The sequence spans 235 residues: Purine nucleoside phosphorylase DeoD-type (235 aa).

Histidine 4 provides a ligand contact to a purine D-ribonucleoside. Phosphate-binding positions include glycine 20, arginine 24, arginine 43, and 87–90 (RVGT). Residues glutamate 162, 179–181 (EME), and 203–204 (SD) contribute to the a purine D-ribonucleoside site. Aspartate 204 (proton donor) is an active-site residue.

It belongs to the PNP/UDP phosphorylase family. Homohexamer; trimer of homodimers.

It carries out the reaction a purine D-ribonucleoside + phosphate = a purine nucleobase + alpha-D-ribose 1-phosphate. The enzyme catalyses a purine 2'-deoxy-D-ribonucleoside + phosphate = a purine nucleobase + 2-deoxy-alpha-D-ribose 1-phosphate. In terms of biological role, catalyzes the reversible phosphorolytic breakdown of the N-glycosidic bond in the beta-(deoxy)ribonucleoside molecules, with the formation of the corresponding free purine bases and pentose-1-phosphate. This chain is Purine nucleoside phosphorylase DeoD-type, found in Bacillus cereus (strain ATCC 14579 / DSM 31 / CCUG 7414 / JCM 2152 / NBRC 15305 / NCIMB 9373 / NCTC 2599 / NRRL B-3711).